Consider the following 195-residue polypeptide: Molybdopterin synthase catalytic subunit (195 aa).

Residues Met1–Gly37 are disordered. Positions Pro25–Gly37 are enriched in low complexity. Substrate-binding positions include His141–Arg142, Lys157, and Lys164–Glu166.

It belongs to the MoaE family. MOCS2B subfamily. As to quaternary structure, heterotetramer; composed of 2 small (MOCS2A) and 2 large (MOCS2B) subunits.

It is found in the cytoplasm. It carries out the reaction 2 [molybdopterin-synthase sulfur-carrier protein]-C-terminal-Gly-aminoethanethioate + cyclic pyranopterin phosphate + H2O = molybdopterin + 2 [molybdopterin-synthase sulfur-carrier protein]-C-terminal Gly-Gly + 2 H(+). It participates in cofactor biosynthesis; molybdopterin biosynthesis. Functionally, catalytic subunit of the molybdopterin synthase complex, a complex that catalyzes the conversion of precursor Z into molybdopterin. Acts by mediating the incorporation of 2 sulfur atoms from thiocarboxylated MOCS2A into precursor Z to generate a dithiolene group. The polypeptide is Molybdopterin synthase catalytic subunit (Emericella nidulans (strain FGSC A4 / ATCC 38163 / CBS 112.46 / NRRL 194 / M139) (Aspergillus nidulans)).